The sequence spans 362 residues: Phosphoserine aminotransferase (362 aa).

Arg-42 lines the L-glutamate pocket. Residues 76-77 (AR), Trp-102, Thr-153, Asp-174, and Gln-197 each bind pyridoxal 5'-phosphate. Lys-198 is subject to N6-(pyridoxal phosphate)lysine. Pyridoxal 5'-phosphate is bound at residue 239 to 240 (NT).

The protein belongs to the class-V pyridoxal-phosphate-dependent aminotransferase family. SerC subfamily. Homodimer. The cofactor is pyridoxal 5'-phosphate.

Its subcellular location is the cytoplasm. It carries out the reaction O-phospho-L-serine + 2-oxoglutarate = 3-phosphooxypyruvate + L-glutamate. It catalyses the reaction 4-(phosphooxy)-L-threonine + 2-oxoglutarate = (R)-3-hydroxy-2-oxo-4-phosphooxybutanoate + L-glutamate. Its pathway is amino-acid biosynthesis; L-serine biosynthesis; L-serine from 3-phospho-D-glycerate: step 2/3. It functions in the pathway cofactor biosynthesis; pyridoxine 5'-phosphate biosynthesis; pyridoxine 5'-phosphate from D-erythrose 4-phosphate: step 3/5. Catalyzes the reversible conversion of 3-phosphohydroxypyruvate to phosphoserine and of 3-hydroxy-2-oxo-4-phosphonooxybutanoate to phosphohydroxythreonine. This is Phosphoserine aminotransferase from Xenorhabdus nematophila (strain ATCC 19061 / DSM 3370 / CCUG 14189 / LMG 1036 / NCIMB 9965 / AN6).